Here is a 1032-residue protein sequence, read N- to C-terminus: uncharacterized protein (1032 aa).

Disordered stretches follow at residues 54 to 80 (NNNN…NNNN), 391 to 451 (QLQI…QTHL), and 884 to 934 (INNE…SKVK). Residues 884-907 (INNENNNENNNNYNGNINSNNNNN) show a composition bias toward low complexity.

This is an uncharacterized protein from Dictyostelium discoideum (Social amoeba).